The chain runs to 79 residues: MSRLGIMVLTLLLLVFIVTSHQDAGEKQATQRDAINFRWRRSLIRRTATEECEEYCEDEEKTCCGLEDGEPVCATTCLG.

Positions 1-20 (MSRLGIMVLTLLLLVFIVTS) are cleaved as a signal peptide. Positions 21–44 (HQDAGEKQATQRDAINFRWRRSLI) are excised as a propeptide. Intrachain disulfides connect C52–C64, C56–C73, and C63–C77. The residue at position 78 (L78) is a Leucine amide.

This sequence belongs to the conotoxin O3 superfamily. In terms of tissue distribution, expressed by the venom duct.

It is found in the secreted. The polypeptide is Conotoxin PnMSGL-03 (Conus pennaceus (Feathered cone)).